The following is a 458-amino-acid chain: MSQLNPKVGFVSLGCPKALVDSERILTQLRVEGYDIVPSYDAADVVVVNTCGFIDSAVTESLDAIGEAMNANGKVIVTGCLGKRPEQIREAYPQVLAVSGPQDYQSVMEAVHAALPPRHDPFVDLVPDYGIKLTPRHYAYLKISEGCNHRCSFCIIPSMRGDLVSRPVDEVLREAERLVRGGVKELLVVSQDTSAYGVDLKYAERPWRDRMYQTRMKALCEGLSELGVWTRLHYVYPYPHVDDVIGLMAEGRLLPYLDIPFQHASPRILKLMKRPGAVEKTLERVQRWKAMCPEITVRSTFIVGFPGETDAEFESLLDFLDQAQLDRVGAFAYSPVDGASANALPDQVPEEVKHERLARFMAKQAQISALRLESKIGSVQQCLVDVIEDDIAVARSRADAPEIDGLVHIQNGGELGLKVGDLVDVEITDSDEHDLFGDALPSGPAVQQPGRTLNLQIV.

The region spanning 6–116 (PKVGFVSLGC…VMEAVHAALP (111 aa)) is the MTTase N-terminal domain. Residues cysteine 15, cysteine 51, cysteine 80, cysteine 147, cysteine 151, and cysteine 154 each coordinate [4Fe-4S] cluster. Residues 133–371 (LTPRHYAYLK…AKQAQISALR (239 aa)) form the Radical SAM core domain. The region spanning 373 to 441 (ESKIGSVQQC…EHDLFGDALP (69 aa)) is the TRAM domain.

This sequence belongs to the methylthiotransferase family. RimO subfamily. Requires [4Fe-4S] cluster as cofactor.

Its subcellular location is the cytoplasm. It catalyses the reaction L-aspartate(89)-[ribosomal protein uS12]-hydrogen + (sulfur carrier)-SH + AH2 + 2 S-adenosyl-L-methionine = 3-methylsulfanyl-L-aspartate(89)-[ribosomal protein uS12]-hydrogen + (sulfur carrier)-H + 5'-deoxyadenosine + L-methionine + A + S-adenosyl-L-homocysteine + 2 H(+). In terms of biological role, catalyzes the methylthiolation of an aspartic acid residue of ribosomal protein uS12. This Xanthomonas euvesicatoria pv. vesicatoria (strain 85-10) (Xanthomonas campestris pv. vesicatoria) protein is Ribosomal protein uS12 methylthiotransferase RimO.